We begin with the raw amino-acid sequence, 320 residues long: Biotin synthase (320 aa).

The 230-residue stretch at 46–275 folds into the Radical SAM core domain; that stretch reads NMGRRVDLCS…YAHIRYAGGR (230 aa). Residues Cys-64, Cys-68, and Cys-71 each coordinate [4Fe-4S] cluster. [2Fe-2S] cluster contacts are provided by Ser-108, Cys-140, Cys-200, and Arg-270.

Belongs to the radical SAM superfamily. Biotin synthase family. Homodimer. [4Fe-4S] cluster is required as a cofactor. It depends on [2Fe-2S] cluster as a cofactor.

The enzyme catalyses (4R,5S)-dethiobiotin + (sulfur carrier)-SH + 2 reduced [2Fe-2S]-[ferredoxin] + 2 S-adenosyl-L-methionine = (sulfur carrier)-H + biotin + 2 5'-deoxyadenosine + 2 L-methionine + 2 oxidized [2Fe-2S]-[ferredoxin]. The protein operates within cofactor biosynthesis; biotin biosynthesis; biotin from 7,8-diaminononanoate: step 2/2. Functionally, catalyzes the conversion of dethiobiotin (DTB) to biotin by the insertion of a sulfur atom into dethiobiotin via a radical-based mechanism. This chain is Biotin synthase, found in Acetivibrio thermocellus (strain ATCC 27405 / DSM 1237 / JCM 9322 / NBRC 103400 / NCIMB 10682 / NRRL B-4536 / VPI 7372) (Clostridium thermocellum).